The chain runs to 375 residues: Chaperone protein DnaJ (375 aa).

A J domain is found at 5–70; sequence DYYEVLGVAR…NKRRAYDAHG (66 aa). The CR-type zinc finger occupies 131–208; the sequence is GIERRIEIPT…CHGAGRVEED (78 aa). The Zn(2+) site is built by Cys144, Cys147, Cys160, Cys163, Cys182, Cys185, Cys196, and Cys199. 4 CXXCXGXG motif repeats span residues 144-151, 160-167, 182-189, and 196-203; these read CAPCHGSG, CGTCHGRG, CPHCDGRG, and CKTCHGAG.

This sequence belongs to the DnaJ family. Homodimer. The cofactor is Zn(2+).

It localises to the cytoplasm. Its function is as follows. Participates actively in the response to hyperosmotic and heat shock by preventing the aggregation of stress-denatured proteins and by disaggregating proteins, also in an autonomous, DnaK-independent fashion. Unfolded proteins bind initially to DnaJ; upon interaction with the DnaJ-bound protein, DnaK hydrolyzes its bound ATP, resulting in the formation of a stable complex. GrpE releases ADP from DnaK; ATP binding to DnaK triggers the release of the substrate protein, thus completing the reaction cycle. Several rounds of ATP-dependent interactions between DnaJ, DnaK and GrpE are required for fully efficient folding. Also involved, together with DnaK and GrpE, in the DNA replication of plasmids through activation of initiation proteins. This Xanthomonas axonopodis pv. citri (strain 306) protein is Chaperone protein DnaJ.